A 301-amino-acid polypeptide reads, in one-letter code: D-alanine--D-alanine ligase (301 aa).

The ATP-grasp domain occupies 99–293 (KRILAFGNVR…FEELLDTIIE (195 aa)). 126 to 181 (IENLGYPVFIKPNNGGSSVATTLVESKEAVKDAVLEALKYDTEVMIEEYIKGDEIT) is a binding site for ATP. 3 residues coordinate Mg(2+): D248, E260, and N262.

It belongs to the D-alanine--D-alanine ligase family. Mg(2+) serves as cofactor. Mn(2+) is required as a cofactor.

The protein localises to the cytoplasm. It catalyses the reaction 2 D-alanine + ATP = D-alanyl-D-alanine + ADP + phosphate + H(+). It participates in cell wall biogenesis; peptidoglycan biosynthesis. Its function is as follows. Cell wall formation. The sequence is that of D-alanine--D-alanine ligase from Clostridium perfringens (strain SM101 / Type A).